A 1594-amino-acid chain; its full sequence is Mucin-like protein (1594 aa).

Residues 1–1530 lie on the Extracellular side of the membrane; it reads DTTAGPDTTS…YETREDGLEM (1530 aa). TSP type-1 domains are found at residues 141–196, 198–253, and 255–310; these read DGGF…GSCP, DGNF…PPCP, and DGNF…GPCP. Intrachain disulfides connect cysteine 153-cysteine 190, cysteine 157-cysteine 195, cysteine 168-cysteine 180, cysteine 210-cysteine 247, cysteine 214-cysteine 252, cysteine 225-cysteine 237, cysteine 267-cysteine 304, cysteine 271-cysteine 309, and cysteine 282-cysteine 294. Positions 400–566 constitute an NIDO domain; sequence LTISDDAFEQ…GVWFFRLEMN (167 aa). In terms of domain architecture, AMOP spans 568-706; it reads ILSLAGKKCN…RSCFGYTLRR (139 aa). Positions 706 to 901 constitute a VWFD domain; sequence RRGLIFGDPH…KWQINASQSL (196 aa). EGF-like domains follow at residues 1063–1108 and 1110–1156; these read LILL…QYCQ and KIDA…SICE. Intrachain disulfides connect cysteine 1067–cysteine 1075, cysteine 1069–cysteine 1096, cysteine 1098–cysteine 1107, cysteine 1114–cysteine 1127, cysteine 1121–cysteine 1141, cysteine 1144–cysteine 1155, cysteine 1161–cysteine 1173, cysteine 1169–cysteine 1182, cysteine 1285–cysteine 1296, cysteine 1292–cysteine 1305, cysteine 1307–cysteine 1320, cysteine 1326–cysteine 1341, cysteine 1334–cysteine 1350, and cysteine 1352–cysteine 1363. Positions 1157-1191 constitute an EGF-like 3; calcium-binding domain; that stretch reads DIDECSDANVSKCDHSCINLPGSYVCDCNQGFSLE. An EGF-like 4; calcium-binding domain is found at 1281 to 1321; it reads DINECTTHRHKCSQICHNLDGSYTCSCQPGFNLSPDQTTCE. The EGF-like 5; calcium-binding domain occupies 1322–1364; the sequence is DIDECGLINEAHCEGSLEICINTMGSFRCECQDGFHRVNDTCQ. Residues 1531-1551 traverse the membrane as a helical segment; that stretch reads IWLLVGVSVAVAVPLMIVIVI. Over 1552-1593 the chain is Cytoplasmic; sequence LYREYRRIAKQRRKTNNFDLRQWSGARERTIYSGFTNSKSAR.

Component of the acid-insoluble and acid-soluble organic matrix of the aragonitic skeleton (at protein level).

The protein localises to the membrane. This chain is Mucin-like protein, found in Acropora millepora (Staghorn coral).